The chain runs to 645 residues: Nucleolar GTP-binding protein 1 (645 aa).

Residues 168 to 340 (RTLLICGYPN…VRNKACEKLL (173 aa)) enclose the OBG-type G domain. Residues 174–181 (GYPNVGKS), 220–224 (DTPGI), and 288–291 (NKTD) each bind GTP. The segment at 567–645 (GQNDSMASGS…KRGIGKSDFR (79 aa)) is disordered. Positions 612 to 624 (NRDARQGEADRHA) are enriched in basic and acidic residues.

This sequence belongs to the TRAFAC class OBG-HflX-like GTPase superfamily. OBG GTPase family. NOG subfamily.

Its subcellular location is the nucleus. It is found in the nucleolus. In terms of biological role, involved in the biogenesis of the 60S ribosomal subunit. This Candida glabrata (strain ATCC 2001 / BCRC 20586 / JCM 3761 / NBRC 0622 / NRRL Y-65 / CBS 138) (Yeast) protein is Nucleolar GTP-binding protein 1 (NOG1).